Consider the following 24-residue polypeptide: Metallothionein (24 aa).

Cd(2+) contacts are provided by Cys-3, Cys-5, Cys-8, Cys-10, Cys-17, Cys-19, and Cys-22.

Belongs to the metallothionein superfamily. Type 8 family. Contains 4 disulfide bonds.

Functionally, metallothioneins have a high content of cysteine residues that bind various heavy metals. The chain is Metallothionein from Neonectria lugdunensis (Aquatic fungus).